The chain runs to 198 residues: Peptidyl-tRNA hydrolase (198 aa).

Position 18 (Tyr18) interacts with tRNA. His23 functions as the Proton acceptor in the catalytic mechanism. TRNA is bound by residues Tyr69, Asn71, and Asn117.

Belongs to the PTH family. As to quaternary structure, monomer.

The protein localises to the cytoplasm. It carries out the reaction an N-acyl-L-alpha-aminoacyl-tRNA + H2O = an N-acyl-L-amino acid + a tRNA + H(+). In terms of biological role, hydrolyzes ribosome-free peptidyl-tRNAs (with 1 or more amino acids incorporated), which drop off the ribosome during protein synthesis, or as a result of ribosome stalling. Catalyzes the release of premature peptidyl moieties from peptidyl-tRNA molecules trapped in stalled 50S ribosomal subunits, and thus maintains levels of free tRNAs and 50S ribosomes. The polypeptide is Peptidyl-tRNA hydrolase (Aeromonas hydrophila subsp. hydrophila (strain ATCC 7966 / DSM 30187 / BCRC 13018 / CCUG 14551 / JCM 1027 / KCTC 2358 / NCIMB 9240 / NCTC 8049)).